The sequence spans 112 residues: Large ribosomal subunit protein uL22 (112 aa).

This sequence belongs to the universal ribosomal protein uL22 family. Part of the 50S ribosomal subunit.

Its function is as follows. This protein binds specifically to 23S rRNA; its binding is stimulated by other ribosomal proteins, e.g. L4, L17, and L20. It is important during the early stages of 50S assembly. It makes multiple contacts with different domains of the 23S rRNA in the assembled 50S subunit and ribosome. In terms of biological role, the globular domain of the protein is located near the polypeptide exit tunnel on the outside of the subunit, while an extended beta-hairpin is found that lines the wall of the exit tunnel in the center of the 70S ribosome. The sequence is that of Large ribosomal subunit protein uL22 from Sulfurovum sp. (strain NBC37-1).